The chain runs to 607 residues: MFRIEILRCTLSQSHPQRFSRASFLLSTWYSQESVSAADNDDDPVLVKLSVAIRDSYKDPPLEFSSFTDCPSIRKVLPSLSVHHVVDLINHNPLSLPQRSIFAFFKFISSQPGFRFTVETYFVLARFLAVHEMFTEAQSLIELVVSRKGKNSASSVFISLVEMRVTPMCGFLVDALMITYTDLGFIPDAIQCFRLSRKHRFDVPIRGCGNLLDRMMKLNPTGTIWGFYMEILDAGFPLNVYVFNILMNKFCKEGNISDAQKVFDEITKRSLQPTVVSFNTLINGYCKVGNLDEGFRLKHQMEKSRTRPDVFTYSALINALCKENKMDGAHGLFDEMCKRGLIPNDVIFTTLIHGHSRNGEIDLMKESYQKMLSKGLQPDIVLYNTLVNGFCKNGDLVAARNIVDGMIRRGLRPDKITYTTLIDGFCRGGDVETALEIRKEMDQNGIELDRVGFSALVCGMCKEGRVIDAERALREMLRAGIKPDDVTYTMMMDAFCKKGDAQTGFKLLKEMQSDGHVPSVVTYNVLLNGLCKLGQMKNADMLLDAMLNIGVVPDDITYNTLLEGHHRHANSSKRYIQKPEIGIVADLASYKSIVNELDRASKDHRNR.

9 PPR repeats span residues 239 to 273, 274 to 308, 309 to 343, 344 to 378, 379 to 413, 414 to 448, 449 to 483, 484 to 518, and 519 to 553; these read NVYV…SLQP, TVVS…RTRP, DVFT…GLIP, NDVI…GLQP, DIVL…GLRP, DKIT…GIEL, DRVG…GIKP, DDVT…GHVP, and SVVT…GVVP.

This sequence belongs to the PPR family. P subfamily.

This is Putative pentatricopeptide repeat-containing protein At1g09680 from Arabidopsis thaliana (Mouse-ear cress).